Here is a 141-residue protein sequence, read N- to C-terminus: Large ribosomal subunit protein uL11c (141 aa).

It belongs to the universal ribosomal protein uL11 family. Part of the ribosomal stalk of the 50S ribosomal subunit. Interacts with L10 and the large rRNA to form the base of the stalk. L10 forms an elongated spine to which L12 dimers bind in a sequential fashion forming a multimeric L10(L12)X complex.

It localises to the plastid. It is found in the cyanelle. Functionally, forms part of the ribosomal stalk which helps the ribosome interact with GTP-bound translation factors. The protein is Large ribosomal subunit protein uL11c of Cyanophora paradoxa.